Consider the following 333-residue polypeptide: Dipeptide transport system permease protein DppB (333 aa).

6 helical membrane-spanning segments follow: residues 9-29, 103-123, 136-156, 197-217, 256-276, and 306-326; these read ILMV…LVHF, AFFA…IAAV, ASLT…ILYV, AVKS…AIIT, LIPV…GAVL, and VLII…LYGV. The ABC transmembrane type-1 domain maps to 96–328; that stretch reads FPATAELAFF…TVDLLYGVVN (233 aa).

It belongs to the binding-protein-dependent transport system permease family. OppBC subfamily.

Its subcellular location is the cell inner membrane. Its function is as follows. Part of the ABC transporter DppBCDF involved in dipeptide transport. Responsible for the translocation of the substrate across the membrane. This chain is Dipeptide transport system permease protein DppB (dppB), found in Haemophilus influenzae (strain ATCC 51907 / DSM 11121 / KW20 / Rd).